We begin with the raw amino-acid sequence, 330 residues long: 6-methylsalicylic acid decarboxylase acuB (330 aa).

Zn(2+)-binding residues include His-6, His-8, His-156, and Asp-276.

This sequence belongs to the metallo-dependent hydrolases superfamily. ACMSD family. As to quaternary structure, monomer.

It is found in the cytoplasm. The protein resides in the cytosol. The catalysed reaction is 6-methylsalicylate + H(+) = 3-methylphenol + CO2. It functions in the pathway secondary metabolite biosynthesis. Functionally, 6-methylsalicylic acid decarboxylase; part of the gene cluster that mediates the biosynthesis of aculins. The pathway begins with the synthesis of 6-methylsalicylic acid by the polyketide synthase (PKS) acuA via condensation of acetate and malonate units. The 6-methylsalicylic acid decarboxylase acuB then catalyzes the decarboxylation of 6-methylsalicylic acid to yield m-cresol (also known as 3-methylphenol). These first reactions occur in the cytosol. The intermediate m-cresol is then transported into the endoplasmic reticulum where the cytochrome P450 monooxygenase acuC converts it to m-hydroxybenzyl alcohol, which is further converted to gentisyl alcohol by the cytochrome P450 monooxygenase acuD. Gentisyl alcohol is further oxidized by the oxidoreductase acuE that probably catalyzes hydroxylation of the aromatic ring. The aromatic system might then be opened by oxidation through a Baeyer-Villiger type of oxidation, which could be catalyzed by acuF, with the carboxylic acid at C-1 subsequently reduced to an aldehyde by acuG. Subsequently, a hemiacetal is formed, before the dehydrogenase acuH would reduce the double bond between C-4 and C-6. Finally, keto-enol tautomerism results in formation of aculinic acid, which exists as two diastereomers (both R/S configurations at C-1) by non-enzymatic hemiacetal formation. The carboxypeptidase acuI could be involved in the linking of aculinic acid to an aculene A moiety produced by the aculene biosynthesis cluster and which leads to the production of aculin A. AcuI may also be involved in the attachment of proline to aculinic acid to form epi-aculins A and B. This is 6-methylsalicylic acid decarboxylase acuB from Aspergillus aculeatus (strain ATCC 16872 / CBS 172.66 / WB 5094).